Reading from the N-terminus, the 235-residue chain is Small ribosomal subunit protein uS3 (235 aa).

The KH type-2 domain maps to 39–107; that stretch reads IRQYVFKALP…DVSLNIVEIR (69 aa).

Belongs to the universal ribosomal protein uS3 family. As to quaternary structure, part of the 30S ribosomal subunit. Forms a tight complex with proteins S10 and S14.

Functionally, binds the lower part of the 30S subunit head. Binds mRNA in the 70S ribosome, positioning it for translation. In Sphingopyxis alaskensis (strain DSM 13593 / LMG 18877 / RB2256) (Sphingomonas alaskensis), this protein is Small ribosomal subunit protein uS3.